The primary structure comprises 368 residues: Ribosomal RNA large subunit methyltransferase M (368 aa).

Residues S199, 232 to 235 (APGG), D251, D271, and D287 contribute to the S-adenosyl-L-methionine site. Residue K316 is the Proton acceptor of the active site.

The protein belongs to the class I-like SAM-binding methyltransferase superfamily. RNA methyltransferase RlmE family. RlmM subfamily. In terms of assembly, monomer.

The protein localises to the cytoplasm. The enzyme catalyses cytidine(2498) in 23S rRNA + S-adenosyl-L-methionine = 2'-O-methylcytidine(2498) in 23S rRNA + S-adenosyl-L-homocysteine + H(+). Its function is as follows. Catalyzes the 2'-O-methylation at nucleotide C2498 in 23S rRNA. The sequence is that of Ribosomal RNA large subunit methyltransferase M from Aromatoleum aromaticum (strain DSM 19018 / LMG 30748 / EbN1) (Azoarcus sp. (strain EbN1)).